The following is a 1092-amino-acid chain: SUMO-specific isopeptidase USPL1 (1092 aa).

2 disordered regions span residues 145-168 (VYDETSSNLPDSSGQQNPIRTADS) and 185-207 (TKDPATVDVSGTGRPSPQNEGCT). 2 stretches are compositionally biased toward polar residues: residues 148 to 163 (ETSSNLPDSSGQQNPI) and 197 to 206 (GRPSPQNEGC). The USP domain maps to 227-500 (VQWKNAYALC…EIHIVIWERK (274 aa)). The Nucleophile role is filled by cysteine 236. The interval 236–495 (CWLDCILSAL…EVPASEIHIV (260 aa)) is SUMO-binding. The active-site Proton acceptor is the histidine 456. Disordered stretches follow at residues 713 to 749 (LKPERVTSQVSNLKKKETTADSQTTTSKSLQNQSLKE), 797 to 859 (GGFK…STSC), and 904 to 930 (AALMSSPQSRTVRSENLEQVPQDGSPN). Polar residues predominate over residues 732–748 (ADSQTTTSKSLQNQSLK). Basic residues predominate over residues 810–819 (HVSKKARKSA). Positions 821 to 832 (KPPPISKPPAGP) are enriched in pro residues. The residue at position 909 (serine 909) is a Phosphoserine.

It belongs to the peptidase C19 family. In terms of assembly, interacts with ELL.

The protein localises to the nucleus. The protein resides in the cajal body. Functionally, SUMO-specific isopeptidase involved in protein desumoylation. Specifically binds SUMO proteins with a higher affinity for SUMO2 and SUMO3 which it cleaves more efficiently. Also able to process full-length SUMO proteins to their mature forms. Plays a key role in RNA polymerase-II-mediated snRNA transcription in the Cajal bodies. Is a component of complexes that can bind to U snRNA genes. The sequence is that of SUMO-specific isopeptidase USPL1 (USPL1) from Homo sapiens (Human).